We begin with the raw amino-acid sequence, 143 residues long: Late embryogenesis abundant protein 1 (143 aa).

Over residues 1 to 17 (MSSQQNQNRQGEQQEQG) the composition is skewed to low complexity. Residues 1–143 (MSSQQNQNRQ…QAGEKVKGRD (143 aa)) form a disordered region. 4 tandem repeats follow at residues 47-57 (KTAEFRDSAGE), 69-79 (KGQEFKERAGE), 80-90 (KAEETKQRAGE), and 91-101 (KMDETKQRAGE). Composition is skewed to basic and acidic residues over residues 47-60 (KTAE…ETIR) and 69-143 (KGQE…KGRD). The interval 47-101 (KTAEFRDSAGETIRDLTGQAQEKGQEFKERAGEKAEETKQRAGEKMDETKQRAGE) is 4 X 11 AA approximate repeats.

Belongs to the LEA type 4 family.

In terms of biological role, may be involved in defense against water stress. This chain is Late embryogenesis abundant protein 1, found in Aphelenchoides avenae (Mycophagous nematode worm).